A 138-amino-acid chain; its full sequence is Small ribosomal subunit protein bS6 (138 aa).

The segment at 100-138 (SPLAKGREEDDSDSSARRARDDSDDDGDDDEDDRRASAD) is disordered. A compositionally biased stretch (acidic residues) spans 121–131 (DSDDDGDDDED).

Belongs to the bacterial ribosomal protein bS6 family.

In terms of biological role, binds together with bS18 to 16S ribosomal RNA. The sequence is that of Small ribosomal subunit protein bS6 from Thioalkalivibrio sulfidiphilus (strain HL-EbGR7).